The primary structure comprises 240 residues: Ribosomal RNA large subunit methyltransferase E (240 aa).

Residues 1–20 (MSKAGGNKGGVKTGGRGGAG) show a composition bias toward gly residues. Residues 1–27 (MSKAGGNKGGVKTGGRGGAGSSNLQVR) are disordered. The S-adenosyl-L-methionine site is built by Gly92, Trp94, Asp115, Asp131, and Asp155. Lys195 acts as the Proton acceptor in catalysis.

The protein belongs to the class I-like SAM-binding methyltransferase superfamily. RNA methyltransferase RlmE family.

It is found in the cytoplasm. It catalyses the reaction uridine(2552) in 23S rRNA + S-adenosyl-L-methionine = 2'-O-methyluridine(2552) in 23S rRNA + S-adenosyl-L-homocysteine + H(+). Specifically methylates the uridine in position 2552 of 23S rRNA at the 2'-O position of the ribose in the fully assembled 50S ribosomal subunit. The polypeptide is Ribosomal RNA large subunit methyltransferase E (Brucella anthropi (strain ATCC 49188 / DSM 6882 / CCUG 24695 / JCM 21032 / LMG 3331 / NBRC 15819 / NCTC 12168 / Alc 37) (Ochrobactrum anthropi)).